A 616-amino-acid polypeptide reads, in one-letter code: Glutamine--fructose-6-phosphate aminotransferase [isomerizing] (616 aa).

Residue Cys-2 is the Nucleophile; for GATase activity of the active site. Positions 2–222 (CGIIGYSGPR…QERIVALSGD (221 aa)) constitute a Glutamine amidotransferase type-2 domain. Positions 70–89 (TGIGHTRWATHGEPSDRNAH) are disordered. SIS domains are found at residues 289 to 428 (IRDD…LRGF) and 461 to 606 (LAHW…VDRP). Lys-611 serves as the catalytic For Fru-6P isomerization activity.

As to quaternary structure, homodimer.

The protein resides in the cytoplasm. The catalysed reaction is D-fructose 6-phosphate + L-glutamine = D-glucosamine 6-phosphate + L-glutamate. Its function is as follows. Catalyzes the first step in hexosamine metabolism, converting fructose-6P into glucosamine-6P using glutamine as a nitrogen source. The protein is Glutamine--fructose-6-phosphate aminotransferase [isomerizing] of Tropheryma whipplei (strain Twist) (Whipple's bacillus).